The chain runs to 192 residues: UPF0149 protein YE3397 (192 aa).

Belongs to the UPF0149 family.

The sequence is that of UPF0149 protein YE3397 from Yersinia enterocolitica serotype O:8 / biotype 1B (strain NCTC 13174 / 8081).